The chain runs to 315 residues: Glucokinase-like protein CC_3167 (315 aa).

This sequence belongs to the bacterial glucokinase family.

This chain is Glucokinase-like protein CC_3167, found in Caulobacter vibrioides (strain ATCC 19089 / CIP 103742 / CB 15) (Caulobacter crescentus).